Here is an 877-residue protein sequence, read N- to C-terminus: Alanine--tRNA ligase (877 aa).

Positions 556, 560, 657, and 661 each coordinate Zn(2+).

This sequence belongs to the class-II aminoacyl-tRNA synthetase family. Zn(2+) is required as a cofactor.

It is found in the cytoplasm. The catalysed reaction is tRNA(Ala) + L-alanine + ATP = L-alanyl-tRNA(Ala) + AMP + diphosphate. Catalyzes the attachment of alanine to tRNA(Ala) in a two-step reaction: alanine is first activated by ATP to form Ala-AMP and then transferred to the acceptor end of tRNA(Ala). Also edits incorrectly charged Ser-tRNA(Ala) and Gly-tRNA(Ala) via its editing domain. In Wolbachia pipientis wMel, this protein is Alanine--tRNA ligase.